We begin with the raw amino-acid sequence, 345 residues long: Anthranilate phosphoribosyltransferase (345 aa).

Residues glycine 84, 87–88 (GD), threonine 92, 94–97 (NIST), 112–120 (KHGNRSVSS), and serine 124 contribute to the 5-phospho-alpha-D-ribose 1-diphosphate site. Anthranilate is bound at residue glycine 84. Serine 96 lines the Mg(2+) pocket. Asparagine 115 serves as a coordination point for anthranilate. Arginine 170 contributes to the anthranilate binding site. Mg(2+) contacts are provided by aspartate 229 and glutamate 230.

Belongs to the anthranilate phosphoribosyltransferase family. In terms of assembly, homodimer. The cofactor is Mg(2+).

It carries out the reaction N-(5-phospho-beta-D-ribosyl)anthranilate + diphosphate = 5-phospho-alpha-D-ribose 1-diphosphate + anthranilate. The protein operates within amino-acid biosynthesis; L-tryptophan biosynthesis; L-tryptophan from chorismate: step 2/5. In terms of biological role, catalyzes the transfer of the phosphoribosyl group of 5-phosphorylribose-1-pyrophosphate (PRPP) to anthranilate to yield N-(5'-phosphoribosyl)-anthranilate (PRA). The polypeptide is Anthranilate phosphoribosyltransferase (Xanthomonas axonopodis pv. citri (strain 306)).